The sequence spans 386 residues: Cysteine protease Amb a 11.0101 (386 aa).

The N-terminal stretch at 1–22 (MEINKLVCFSFSLVLILGLVES) is a signal peptide. The segment at 6-20 (LVCFSFSLVLILGLV) is T-cell epitope. MHC class II peptide able to activate CD(4+) T cells of the ragweed pollen-allergic patients indicated by significantly increased IL-2 production compared to non-allergic individuals. Not recognized by IgE of the patients allergic to ragweed pollen. The propeptide at 23 to 108 (FHYHERELES…SKISHFQALR (86 aa)) is activation peptide. An N-linked (GlcNAc...) (complex) asparagine glycan is attached at N127. 3 disulfides stabilise this stretch: C152/C193, C186/C226, and C283/C334. The active site involves C155. A B-cell epitope. Binds to IgE of the patients allergic to ragweed pollen region spans residues 173-186 (GKLVKFSEQQLVDC). Catalysis depends on residues H289 and N310. The segment at 340 to 377 (SSFPIMNDPNPPKDDPNGPKDDPDAPKDPKFKTTQRLQ) is disordered. The segment covering 350–370 (PPKDDPNGPKDDPDAPKDPKF) has biased composition (basic and acidic residues). A propeptide spans 371-386 (KTTQRLQGIRTKLLEL) (removed in mature form).

It belongs to the peptidase C1 family. In terms of assembly, homodimer. Autocatalytic proteolytic cleavage of N-terminal activation peptide. In terms of processing, N-glycosylated. Glycosylation is not required for binding to IgE. In terms of tissue distribution, expressed in pollen (at protein and mRNA level).

Its activity is regulated as follows. Activated by L-cysteine. Inhibited by cysteine protease inhibitor E64 (L-trans-epoxysuccinyl-leucylamide-(4-guanido)-butane). Inhibited by cysteine/serine protease inhibitor leupeptin. Not inhibited by serine protease inhibitors 4-(2-aminoethyl)benzenesulfonyl fluoride hydrochloride (AEBSF) and phenylmethanesulfonyl fluoride (PMSF), metallo protease inhibitor bestatin or aspartic protease inhibitor pepstatin A. Functionally, cysteine protease. Hydrolyzes casein and synthetic peptide Boc-Val-Leu-Lys-7-amino-4-methylcoumarin (Boc-VLK-AMC) in vitro. In Ambrosia artemisiifolia (Common ragweed), this protein is Cysteine protease Amb a 11.0101.